Consider the following 157-residue polypeptide: Jacalin-related lectin 15 (157 aa).

Residues Ala-13–Pro-152 form the Jacalin-type lectin domain.

Belongs to the jacalin lectin family. As to expression, expressed in stems, leaves and flowers. Not detected in roots.

Functionally, confers broad resistance to potexviruses. Inhibits virus accumulation at the cellular level. This Arabidopsis thaliana (Mouse-ear cress) protein is Jacalin-related lectin 15 (JAL15).